Reading from the N-terminus, the 348-residue chain is Phosphate acyltransferase (348 aa).

Belongs to the PlsX family. Homodimer. Probably interacts with PlsY.

Its subcellular location is the cytoplasm. It carries out the reaction a fatty acyl-[ACP] + phosphate = an acyl phosphate + holo-[ACP]. The protein operates within lipid metabolism; phospholipid metabolism. Functionally, catalyzes the reversible formation of acyl-phosphate (acyl-PO(4)) from acyl-[acyl-carrier-protein] (acyl-ACP). This enzyme utilizes acyl-ACP as fatty acyl donor, but not acyl-CoA. The polypeptide is Phosphate acyltransferase (Leuconostoc citreum (strain KM20)).